The primary structure comprises 172 residues: Large ribosomal subunit protein uL10 (172 aa).

It belongs to the universal ribosomal protein uL10 family. As to quaternary structure, part of the ribosomal stalk of the 50S ribosomal subunit. The N-terminus interacts with L11 and the large rRNA to form the base of the stalk. The C-terminus forms an elongated spine to which L12 dimers bind in a sequential fashion forming a multimeric L10(L12)X complex.

Its function is as follows. Forms part of the ribosomal stalk, playing a central role in the interaction of the ribosome with GTP-bound translation factors. This chain is Large ribosomal subunit protein uL10, found in Ruegeria pomeroyi (strain ATCC 700808 / DSM 15171 / DSS-3) (Silicibacter pomeroyi).